We begin with the raw amino-acid sequence, 603 residues long: 65-kDa microtubule-associated protein 7 (603 aa).

3 coiled-coil regions span residues Lys-48 to Ile-79, Asp-131 to Asp-186, and Arg-468 to Lys-502. The interval Ile-501–Arg-559 is disordered. Phosphoserine is present on Ser-513. Polar residues-rich tracts occupy residues Arg-515–Tyr-526 and Arg-537–Arg-559. Residue Ser-599 is modified to Phosphoserine.

It belongs to the MAP65/ASE1 family. Forms dimer. Binds to microtubules (MT).

It localises to the nucleus. The protein resides in the cytoplasm. It is found in the cytoskeleton. Its subcellular location is the spindle pole. This Arabidopsis thaliana (Mouse-ear cress) protein is 65-kDa microtubule-associated protein 7 (MAP65-7).